Reading from the N-terminus, the 178-residue chain is Interleukin-10 (178 aa).

A signal peptide spans 1-18 (MHSSALLCCLVLLTGVRA). Disulfide bonds link Cys-30-Cys-126 and Cys-80-Cys-132. Asn-134 carries an N-linked (GlcNAc...) asparagine glycan.

It belongs to the IL-10 family. Homodimer. Interacts with IL10RA and IL10RB.

The protein localises to the secreted. Its function is as follows. Major immune regulatory cytokine that acts on many cells of the immune system where it has profound anti-inflammatory functions, limiting excessive tissue disruption caused by inflammation. Mechanistically, IL10 binds to its heterotetrameric receptor comprising IL10RA and IL10RB leading to JAK1 and STAT2-mediated phosphorylation of STAT3. In turn, STAT3 translocates to the nucleus where it drives expression of anti-inflammatory mediators. Targets antigen-presenting cells (APCs) such as macrophages and monocytes and inhibits their release of pro-inflammatory cytokines including granulocyte-macrophage colony-stimulating factor /GM-CSF, granulocyte colony-stimulating factor/G-CSF, IL-1 alpha, IL-1 beta, IL-6, IL-8 and TNF-alpha. Also interferes with antigen presentation by reducing the expression of MHC-class II and co-stimulatory molecules, thereby inhibiting their ability to induce T cell activation. In addition, controls the inflammatory response of macrophages by reprogramming essential metabolic pathways including mTOR signaling. The sequence is that of Interleukin-10 (IL10) from Macaca mulatta (Rhesus macaque).